The following is a 1042-amino-acid chain: Isoleucine--tRNA ligase (1042 aa).

A 'HIGH' region motif is present at residues 48–58 (PFATGLPHFGH). The 'KMSKS' region signature appears at 594–598 (KMSKS). Lysine 597 is an ATP binding site.

It belongs to the class-I aminoacyl-tRNA synthetase family. IleS type 2 subfamily. As to quaternary structure, monomer. Requires Zn(2+) as cofactor.

The protein localises to the cytoplasm. The enzyme catalyses tRNA(Ile) + L-isoleucine + ATP = L-isoleucyl-tRNA(Ile) + AMP + diphosphate. Catalyzes the attachment of isoleucine to tRNA(Ile). As IleRS can inadvertently accommodate and process structurally similar amino acids such as valine, to avoid such errors it has two additional distinct tRNA(Ile)-dependent editing activities. One activity is designated as 'pretransfer' editing and involves the hydrolysis of activated Val-AMP. The other activity is designated 'posttransfer' editing and involves deacylation of mischarged Val-tRNA(Ile). The chain is Isoleucine--tRNA ligase from Borreliella afzelii (strain PKo) (Borrelia afzelii).